The sequence spans 887 residues: Cadherin-1 (887 aa).

Positions 1–26 (MGRRWGSPALQRFPVLVLLLLLQVCG) are cleaved as a signal peptide. A propeptide spanning residues 27-160 (RRCDEAAPCQ…DPGFLRRQKR (134 aa)) is cleaved from the precursor. Cadherin domains are found at residues 161-268 (DWVI…KPVF), 269-381 (IKEV…IPIF), 382-493 (NPTM…PPVF), 494-599 (VPPI…DNGP), and 600-704 (TPEP…RRSY). Residues 161–714 (DWVIPPISCL…IVGGLGVPAI (554 aa)) are Extracellular-facing. Residue Asp-263 participates in Ca(2+) binding. N-linked (GlcNAc...) asparagine glycosylation is present at Asn-291. Asp-294 is a Ca(2+) binding site. N-linked (GlcNAc...) asparagine glycosylation occurs at Asn-346. N-linked (GlcNAc...) asparagine glycans are attached at residues Asn-564 and Asn-643. Residues 715-735 (LGILGGILALLILLLLLLLFA) form a helical membrane-spanning segment. Topologically, residues 736–887 (RRRKVEKEPL…ELYGGGEDDE (152 aa)) are cytoplasmic. Residues 745 to 770 (LLPPEDDMRDNVYNYDEEGGGEEDQD) form a disordered region. Positions 759–770 (YDEEGGGEEDQD) are enriched in acidic residues.

As to quaternary structure, homodimer. Interacts with CTNNA2. In terms of tissue distribution, expressed in the liver.

The protein resides in the cell junction. It localises to the adherens junction. Its subcellular location is the cell membrane. It is found in the endosome. The protein localises to the golgi apparatus. The protein resides in the trans-Golgi network. It localises to the cytoplasm. Its subcellular location is the desmosome. Functionally, cadherins are calcium-dependent cell adhesion proteins. They preferentially interact with themselves in a homophilic manner in connecting cells; cadherins may thus contribute to the sorting of heterogeneous cell types. Promotes organization of radial actin fiber structure and cellular response to contractile forces, via anchoring of radial actin fibers to CDH1 junction complexes at the cell membrane. E-cadherin is a ligand for integrin alpha-E/beta-7. This Gallus gallus (Chicken) protein is Cadherin-1 (CDH1).